Reading from the N-terminus, the 226-residue chain is ATP synthase F(0) complex subunit a (226 aa).

Helical transmembrane passes span 12–32 (PTVL…LLVP), 68–88 (WSLM…LGLF), 97–117 (QLSM…AMGL), 138–158 (IPML…ALAV), 164–184 (ITAG…MLTI), and 189–209 (TLIT…VALI).

This sequence belongs to the ATPase A chain family. Component of the ATP synthase complex composed at least of ATP5F1A/subunit alpha, ATP5F1B/subunit beta, ATP5MC1/subunit c (homooctomer), MT-ATP6/subunit a, MT-ATP8/subunit 8, ATP5ME/subunit e, ATP5MF/subunit f, ATP5MG/subunit g, ATP5MK/subunit k, ATP5MJ/subunit j, ATP5F1C/subunit gamma, ATP5F1D/subunit delta, ATP5F1E/subunit epsilon, ATP5PF/subunit F6, ATP5PB/subunit b, ATP5PD/subunit d, ATP5PO/subunit OSCP. ATP synthase complex consists of a soluble F(1) head domain (subunits alpha(3) and beta(3)) - the catalytic core - and a membrane F(0) domain - the membrane proton channel (subunits c, a, 8, e, f, g, k and j). These two domains are linked by a central stalk (subunits gamma, delta, and epsilon) rotating inside the F1 region and a stationary peripheral stalk (subunits F6, b, d, and OSCP). Interacts with DNAJC30; interaction is direct.

It is found in the mitochondrion inner membrane. It carries out the reaction H(+)(in) = H(+)(out). Its function is as follows. Subunit a, of the mitochondrial membrane ATP synthase complex (F(1)F(0) ATP synthase or Complex V) that produces ATP from ADP in the presence of a proton gradient across the membrane which is generated by electron transport complexes of the respiratory chain. ATP synthase complex consist of a soluble F(1) head domain - the catalytic core - and a membrane F(1) domain - the membrane proton channel. These two domains are linked by a central stalk rotating inside the F(1) region and a stationary peripheral stalk. During catalysis, ATP synthesis in the catalytic domain of F(1) is coupled via a rotary mechanism of the central stalk subunits to proton translocation. With the subunit c (ATP5MC1), forms the proton-conducting channel in the F(0) domain, that contains two crucial half-channels (inlet and outlet) that facilitate proton movement from the mitochondrial intermembrane space (IMS) into the matrix. Protons are taken up via the inlet half-channel and released through the outlet half-channel, following a Grotthuss mechanism. The polypeptide is ATP synthase F(0) complex subunit a (Pongo pygmaeus (Bornean orangutan)).